We begin with the raw amino-acid sequence, 352 residues long: Diacylglycerol acyltransferase/mycolyltransferase Ag85C (352 aa).

An N-terminal signal peptide occupies residues 1–37 (MSFIEKVRKLRGAAATMPRRLAIAAVGASLLSGVAVA). 86–87 (LR) serves as a coordination point for substrate. A fibronectin-binding region spans residues 102–112 (FEEFYQSGLSV). Substrate contacts are provided by Ser-170 and Asn-198. The active-site Nucleophile is Ser-170. Residue Glu-274 is part of the active site. Substrate-binding positions include 276-279 (LTLR) and 306-308 (HSW). The active site involves His-306. Positions 332–352 (TAAPAQPAQPAQPAQPAQPAT) are disordered. Over residues 333–352 (AAPAQPAQPAQPAQPAQPAT) the composition is skewed to low complexity.

This sequence belongs to the mycobacterial A85 antigen family. As to quaternary structure, homodimer.

The protein resides in the secreted. The catalysed reaction is an acyl-CoA + a 1,2-diacyl-sn-glycerol = a triacyl-sn-glycerol + CoA. It catalyses the reaction 2 alpha,alpha'-trehalose 6-mycolate = alpha,alpha'-trehalose 6,6'-bismycolate + alpha,alpha-trehalose. The antigen 85 proteins (FbpA, FbpB, FbpC) are responsible for the high affinity of mycobacteria to fibronectin, a large adhesive glycoprotein, which facilitates the attachment of M.tuberculosis to murine alveolar macrophages (AMs). They also help to maintain the integrity of the cell wall by catalyzing the transfer of mycolic acids to cell wall arabinogalactan and through the synthesis of alpha,alpha-trehalose dimycolate (TDM, cord factor). They catalyze the transfer of a mycoloyl residue from one molecule of alpha,alpha-trehalose monomycolate (TMM) to another TMM, leading to the formation of TDM. The polypeptide is Diacylglycerol acyltransferase/mycolyltransferase Ag85C (fbpC) (Mycobacterium avium).